Reading from the N-terminus, the 315-residue chain is Methionyl-tRNA formyltransferase (315 aa).

113-116 contacts (6S)-5,6,7,8-tetrahydrofolate; the sequence is SLLP.

This sequence belongs to the Fmt family.

It catalyses the reaction L-methionyl-tRNA(fMet) + (6R)-10-formyltetrahydrofolate = N-formyl-L-methionyl-tRNA(fMet) + (6S)-5,6,7,8-tetrahydrofolate + H(+). Functionally, attaches a formyl group to the free amino group of methionyl-tRNA(fMet). The formyl group appears to play a dual role in the initiator identity of N-formylmethionyl-tRNA by promoting its recognition by IF2 and preventing the misappropriation of this tRNA by the elongation apparatus. This is Methionyl-tRNA formyltransferase from Shigella boydii serotype 4 (strain Sb227).